The primary structure comprises 84 residues: ATP synthase subunit c (84 aa).

2 consecutive transmembrane segments (helical) span residues 21–38 (ALGAAIAVIGAGIGIGKI) and 60–80 (MIIIAALVEGVALIAIIVCLL).

The protein belongs to the ATPase C chain family. As to quaternary structure, F-type ATPases have 2 components, F(1) - the catalytic core - and F(0) - the membrane proton channel. F(1) has five subunits: alpha(3), beta(3), gamma(1), delta(1), epsilon(1). F(0) has three main subunits: a(1), b(2) and c(10-14). The alpha and beta chains form an alternating ring which encloses part of the gamma chain. F(1) is attached to F(0) by a central stalk formed by the gamma and epsilon chains, while a peripheral stalk is formed by the delta and b chains.

The protein resides in the cell inner membrane. In terms of biological role, f(1)F(0) ATP synthase produces ATP from ADP in the presence of a proton or sodium gradient. F-type ATPases consist of two structural domains, F(1) containing the extramembraneous catalytic core and F(0) containing the membrane proton channel, linked together by a central stalk and a peripheral stalk. During catalysis, ATP synthesis in the catalytic domain of F(1) is coupled via a rotary mechanism of the central stalk subunits to proton translocation. Functionally, key component of the F(0) channel; it plays a direct role in translocation across the membrane. A homomeric c-ring of between 10-14 subunits forms the central stalk rotor element with the F(1) delta and epsilon subunits. This Phocaeicola vulgatus (strain ATCC 8482 / DSM 1447 / JCM 5826 / CCUG 4940 / NBRC 14291 / NCTC 11154) (Bacteroides vulgatus) protein is ATP synthase subunit c.